The sequence spans 503 residues: Glutamate--tRNA ligase (503 aa).

A 'HIGH' region motif is present at residues 9-19; sequence PSPTGDPHVGT. The 'KMSKS' region signature appears at 251-255; the sequence is KLSKR. Lysine 254 serves as a coordination point for ATP.

The protein belongs to the class-I aminoacyl-tRNA synthetase family. Glutamate--tRNA ligase type 1 subfamily. As to quaternary structure, monomer.

The protein resides in the cytoplasm. It catalyses the reaction tRNA(Glu) + L-glutamate + ATP = L-glutamyl-tRNA(Glu) + AMP + diphosphate. In terms of biological role, catalyzes the attachment of glutamate to tRNA(Glu) in a two-step reaction: glutamate is first activated by ATP to form Glu-AMP and then transferred to the acceptor end of tRNA(Glu). This is Glutamate--tRNA ligase from Saccharophagus degradans (strain 2-40 / ATCC 43961 / DSM 17024).